The primary structure comprises 377 residues: Flagellin (377 aa).

Belongs to the bacterial flagellin family.

Its subcellular location is the secreted. The protein resides in the bacterial flagellum. Flagellin is the subunit protein which polymerizes to form the filaments of bacterial flagella. This chain is Flagellin (fla), found in Clostridium tyrobutyricum.